The sequence spans 143 residues: Putative pre-16S rRNA nuclease (143 aa).

It belongs to the YqgF nuclease family.

It is found in the cytoplasm. Its function is as follows. Could be a nuclease involved in processing of the 5'-end of pre-16S rRNA. The sequence is that of Putative pre-16S rRNA nuclease from Lactobacillus johnsonii (strain CNCM I-12250 / La1 / NCC 533).